Reading from the N-terminus, the 273-residue chain is Transmembrane epididymal protein 1 (273 aa).

The next 6 membrane-spanning stretches (helical) occupy residues 34-54 (IVTG…GMVL), 72-92 (LTMF…KNVL), 96-116 (CVGL…LLMV), 129-149 (VYSL…AELW), 158-178 (LMET…GFIL), and 195-215 (IMFV…FLLG).

The protein belongs to the TMEM45 family.

The protein resides in the membrane. The protein is Transmembrane epididymal protein 1 (TEDDM1) of Homo sapiens (Human).